We begin with the raw amino-acid sequence, 51 residues long: Large ribosomal subunit protein eL39 (51 aa).

Belongs to the eukaryotic ribosomal protein eL39 family.

In Saccharolobus islandicus (strain L.S.2.15 / Lassen #1) (Sulfolobus islandicus), this protein is Large ribosomal subunit protein eL39.